Reading from the N-terminus, the 126-residue chain is Holo-[acyl-carrier-protein] synthase (126 aa).

Asp9 and Glu58 together coordinate Mg(2+).

The protein belongs to the P-Pant transferase superfamily. AcpS family. Mg(2+) serves as cofactor.

Its subcellular location is the cytoplasm. The enzyme catalyses apo-[ACP] + CoA = holo-[ACP] + adenosine 3',5'-bisphosphate + H(+). Functionally, transfers the 4'-phosphopantetheine moiety from coenzyme A to a Ser of acyl-carrier-protein. This chain is Holo-[acyl-carrier-protein] synthase, found in Buchnera aphidicola subsp. Acyrthosiphon pisum (strain APS) (Acyrthosiphon pisum symbiotic bacterium).